Consider the following 259-residue polypeptide: Tegument protein UL51 homolog (259 aa).

Cys9 carries S-palmitoyl cysteine; by host lipidation.

The protein belongs to the herpesviridae UL51 family. As to quaternary structure, oligomerizes. Interacts with ORF53; this interaction mediates ORF53 incorporation to virions. Post-translationally, phosphorylated. Palmitoylation is necessary for Golgi localization.

The protein resides in the virion tegument. Its subcellular location is the host cytoplasm. It is found in the host Golgi apparatus. Functionally, plays several roles during the time course of infection, including egress of virus particles from the perinuclear space and secondary envelopment of cytoplasmic capsids that bud into specific trans-Golgi network (TGN)-derived membranes. This chain is Tegument protein UL51 homolog, found in Varicella-zoster virus (strain Dumas) (HHV-3).